A 382-amino-acid chain; its full sequence is Dual-specificity RNA methyltransferase RlmN (382 aa).

The active-site Proton acceptor is the glutamate 91. In terms of domain architecture, Radical SAM core spans 97–339 (ETDRGTLCIS…TTVRKTRGDD (243 aa)). The cysteines at positions 104 and 344 are disulfide-linked. Residues cysteine 111, cysteine 115, and cysteine 118 each contribute to the [4Fe-4S] cluster site. S-adenosyl-L-methionine-binding positions include 165-166 (GE), serine 197, 219-221 (SLH), and asparagine 301. The active-site S-methylcysteine intermediate is the cysteine 344.

It belongs to the radical SAM superfamily. RlmN family. [4Fe-4S] cluster is required as a cofactor.

It localises to the cytoplasm. The enzyme catalyses adenosine(2503) in 23S rRNA + 2 reduced [2Fe-2S]-[ferredoxin] + 2 S-adenosyl-L-methionine = 2-methyladenosine(2503) in 23S rRNA + 5'-deoxyadenosine + L-methionine + 2 oxidized [2Fe-2S]-[ferredoxin] + S-adenosyl-L-homocysteine. The catalysed reaction is adenosine(37) in tRNA + 2 reduced [2Fe-2S]-[ferredoxin] + 2 S-adenosyl-L-methionine = 2-methyladenosine(37) in tRNA + 5'-deoxyadenosine + L-methionine + 2 oxidized [2Fe-2S]-[ferredoxin] + S-adenosyl-L-homocysteine. Functionally, specifically methylates position 2 of adenine 2503 in 23S rRNA and position 2 of adenine 37 in tRNAs. m2A2503 modification seems to play a crucial role in the proofreading step occurring at the peptidyl transferase center and thus would serve to optimize ribosomal fidelity. The sequence is that of Dual-specificity RNA methyltransferase RlmN from Polaromonas naphthalenivorans (strain CJ2).